Consider the following 496-residue polypeptide: Glutamate--tRNA ligase (496 aa).

The short motif at 12–22 (PSPTGHLHIGN) is the 'HIGH' region element. The short motif at 259–263 (KLSKR) is the 'KMSKS' region element. Residue Lys-262 participates in ATP binding.

It belongs to the class-I aminoacyl-tRNA synthetase family. Glutamate--tRNA ligase type 1 subfamily. Monomer.

Its subcellular location is the cytoplasm. It carries out the reaction tRNA(Glu) + L-glutamate + ATP = L-glutamyl-tRNA(Glu) + AMP + diphosphate. Catalyzes the attachment of glutamate to tRNA(Glu) in a two-step reaction: glutamate is first activated by ATP to form Glu-AMP and then transferred to the acceptor end of tRNA(Glu). The protein is Glutamate--tRNA ligase of Lactiplantibacillus plantarum (strain ATCC BAA-793 / NCIMB 8826 / WCFS1) (Lactobacillus plantarum).